We begin with the raw amino-acid sequence, 321 residues long: Phospho-N-acetylmuramoyl-pentapeptide-transferase (321 aa).

A run of 10 helical transmembrane segments spans residues 1-21, 50-70, 76-96, 112-132, 140-160, 176-196, 200-220, 225-245, 250-270, and 300-320; these read MLFI…PILI, MGGL…IFFV, IILL…DDYI, FLAQ…FHLV, IPFT…IVFW, GLAT…SFVL, AIGA…PYNL, VFMG…ISIM, LSLL…MLQV, and VVTV…WIGV.

This sequence belongs to the glycosyltransferase 4 family. MraY subfamily. Mg(2+) is required as a cofactor.

It localises to the cell membrane. The catalysed reaction is UDP-N-acetyl-alpha-D-muramoyl-L-alanyl-gamma-D-glutamyl-L-lysyl-D-alanyl-D-alanine + di-trans,octa-cis-undecaprenyl phosphate = Mur2Ac(oyl-L-Ala-gamma-D-Glu-L-Lys-D-Ala-D-Ala)-di-trans,octa-cis-undecaprenyl diphosphate + UMP. The protein operates within cell wall biogenesis; peptidoglycan biosynthesis. Catalyzes the initial step of the lipid cycle reactions in the biosynthesis of the cell wall peptidoglycan: transfers peptidoglycan precursor phospho-MurNAc-pentapeptide from UDP-MurNAc-pentapeptide onto the lipid carrier undecaprenyl phosphate, yielding undecaprenyl-pyrophosphoryl-MurNAc-pentapeptide, known as lipid I. This Staphylococcus haemolyticus (strain JCSC1435) protein is Phospho-N-acetylmuramoyl-pentapeptide-transferase.